A 211-amino-acid chain; its full sequence is FMN-dependent NADH:quinone oxidoreductase 2 (211 aa).

102–105 (MWNF) contacts FMN.

The protein belongs to the azoreductase type 1 family. As to quaternary structure, homodimer. FMN is required as a cofactor.

It catalyses the reaction 2 a quinone + NADH + H(+) = 2 a 1,4-benzosemiquinone + NAD(+). The enzyme catalyses N,N-dimethyl-1,4-phenylenediamine + anthranilate + 2 NAD(+) = 2-(4-dimethylaminophenyl)diazenylbenzoate + 2 NADH + 2 H(+). In terms of biological role, quinone reductase that provides resistance to thiol-specific stress caused by electrophilic quinones. Its function is as follows. Also exhibits azoreductase activity. Catalyzes the reductive cleavage of the azo bond in aromatic azo compounds to the corresponding amines. The polypeptide is FMN-dependent NADH:quinone oxidoreductase 2 (Bacillus cereus (strain ATCC 14579 / DSM 31 / CCUG 7414 / JCM 2152 / NBRC 15305 / NCIMB 9373 / NCTC 2599 / NRRL B-3711)).